A 350-amino-acid polypeptide reads, in one-letter code: Bifunctional methylenetetrahydrofolate dehydrogenase/cyclohydrolase, mitochondrial (350 aa).

A mitochondrion-targeting transit peptide spans 1–35 (MAATSLMSALAARLLQPAHSCSLRLRPFHLAAVRN). Lys-50 carries the post-translational modification N6-acetyllysine; alternate. Lys-50 is covalently cross-linked (Glycyl lysine isopeptide (Lys-Gly) (interchain with G-Cter in SUMO2); alternate). Residues 84–88 (YVLNK) and 131–133 (VQL) each bind substrate. NAD(+) contacts are provided by residues 200 to 202 (GRS) and Arg-233. 309–313 (PGGVG) contributes to the substrate binding site.

It belongs to the tetrahydrofolate dehydrogenase/cyclohydrolase family. As to quaternary structure, homodimer. Mg(2+) is required as a cofactor.

Its subcellular location is the mitochondrion. The catalysed reaction is (6R)-5,10-methylene-5,6,7,8-tetrahydrofolate + NAD(+) = (6R)-5,10-methenyltetrahydrofolate + NADH. It carries out the reaction (6R)-5,10-methenyltetrahydrofolate + H2O = (6R)-10-formyltetrahydrofolate + H(+). Functionally, although its dehydrogenase activity is NAD-specific, it can also utilize NADP at a reduced efficiency. The sequence is that of Bifunctional methylenetetrahydrofolate dehydrogenase/cyclohydrolase, mitochondrial (MTHFD2) from Homo sapiens (Human).